Reading from the N-terminus, the 384-residue chain is Urea transporter 1 (384 aa).

The disordered stretch occupies residues 1 to 23 (MDDNPTAVKLDQGGNQAPQGQGR). Helical transmembrane passes span 61–81 (ISQVVFVSNPISGILILVGLL), 85–105 (PWCALNGCVGTVVSTLTALLL), 111–131 (AITAGLQGYNATLVGILMAIY), 138–158 (FWWLLFPVSAMSMTCPIFSSA), and 169–189 (PVFTLPFNMALSMYLSATGHF). A glycan (N-linked (GlcNAc...) asparagine) is linked at asparagine 206. A run of 3 helical transmembrane segments spans residues 237–257 (GGIFLGAILLSSPLMCLHAAI), 279–299 (GLWGFNSSLACIAIGGMFMAL), and 327–347 (VVGLPSCTWPFCLATLLFLLL).

It belongs to the urea transporter family. Homotrimer; each subunit contains a pore through which urea permeates. Identified in a complex with STOM.

Its subcellular location is the cell membrane. The protein resides in the basolateral cell membrane. The catalysed reaction is urea(in) = urea(out). Its function is as follows. Mediates the transport of urea driven by a concentration gradient across the cell membranes of erythrocytes and the renal inner medullary collecting duct which is critical to the urinary concentrating mechanism. Facilitates water transport in erythrocytes. The sequence is that of Urea transporter 1 (SLC14A1) from Ovis aries (Sheep).